A 130-amino-acid chain; its full sequence is Small ribosomal subunit protein uS9 (130 aa).

This sequence belongs to the universal ribosomal protein uS9 family.

This Pseudomonas fluorescens (strain SBW25) protein is Small ribosomal subunit protein uS9.